The following is a 720-amino-acid chain: MRSAFYVAIVLLVAAGSQTAAKCDQDEPQHAPSNNFMASFDRVDQMLPSQVLQASRNLKDDFMFSAGDEERTPLAPSKLLKKVKFPDSVISTASAMRTTEDVNAIEIASKNLNQLRSNKRQRIVQTPNKMAGQAVVTPPALDIPLVSVANEKSLKLPKRRTRKRPTAVVENAARSVPQHDYHSAPQDSFKINAEAPNARLYNQLITQKALQLEKNEHLEKNAREEELVSFDLLHLFEKSAHPAAGNRQEANAIKVASKNLIQLESNTRKRNNVVGQVKRKRPNRDRSPVSVANGKPLGLAKRRKSNHPTAVAKNAASSVKQHDHRVAPPEPSRLDAKALDGRINNQQITQKASQLDKNEHVDKRSWREELVSVDELMHLFDEFDKSAHPTTVSRQETSAIEATSKSLIPAESSTHKGIALTSNDVVEVGVHAPPDPDKFLVLVADNMPMILAERLKTTSPTAIMNNAARFVTQHYERLAHLESSTTNAEALSGRLINQPITQKALQLDKSQHVDDVEDIEKQFSRAVGHFWHLREVNDKSAHTTAVYRQTVPDDWNAEYAKGPKTLSQDGKINNDVKEVHAAFLEAFNLPFHQYPQETAIMLKIVQRKNKSSPNNFRTFKTFKLLAQNQMILSHLQELLAPDLKKLLGYGNMALPITLKNLKEALNVKLVIMYDLFIIFCHERVDLVKDLPPKPTPSQWIFEISTLSSGNKNRQVLPPHD.

The signal sequence occupies residues 1–20 (MRSAFYVAIVLLVAAGSQTA). A RxLR-dEER motif is present at residues 56 to 71 (RNLKDDFMFSAGDEER). The tract at residues 264-335 (ESNTRKRNNV…VAPPEPSRLD (72 aa)) is disordered. Basic and acidic residues predominate over residues 320 to 335 (KQHDHRVAPPEPSRLD). N-linked (GlcNAc...) asparagine glycosylation occurs at Asn609.

It belongs to the RxLR effector family.

Its subcellular location is the secreted. The protein localises to the host nucleus. Secreted effector that acts as an elicitor that induces cell death in host plant cells. This is Secreted RxLR effector protein 138 from Plasmopara viticola (Downy mildew of grapevine).